An 81-amino-acid polypeptide reads, in one-letter code: Mipartoxin-2 (81 aa).

Positions 1–21 are cleaved as a signal peptide; that stretch reads MKTLLLTLVVVTIVCLDLGNS. 4 cysteine pairs are disulfide-bonded: Cys-24–Cys-42, Cys-35–Cys-61, Cys-65–Cys-73, and Cys-74–Cys-79.

It belongs to the three-finger toxin family. Short-chain subfamily. Expressed by the venom gland.

Its subcellular location is the secreted. Functionally, snake venom neurotoxin that blocks neuromuscular transmission, presenting a postsynaptic action through the nicotinic acetylcholine receptor (nAChR). Has no cytotoxic activity. The protein is Mipartoxin-2 of Micrurus mipartitus (Red-tailed coral snake).